The chain runs to 889 residues: Disease resistance protein RPS5 (889 aa).

Gly-2 is lipidated: N-myristoyl glycine. A lipid anchor (S-palmitoyl cysteine) is attached at Cys-4. Positions 29–58 (IHNLSKNLASLQKAMRMLKARQYDVIRRLE) form a coiled coil. An NB-ARC domain is found at 140–444 (SEATPFADVD…SEGFINEKEG (305 aa)). Residue 183–190 (GMGGVGKT) participates in ATP binding. 6 LRR repeats span residues 518–539 (TVRK…HECA), 540–561 (ALTT…FFRC), 564–586 (HLVV…ISEL), 588–610 (SLRY…WTLK), 611–633 (KLIH…SNLW), and 634–656 (NLRT…KELQ).

Belongs to the disease resistance NB-LRR family. In terms of assembly, in uninfected plants, interacts with PBS1 through the coiled coil domain. Homodimer.

Its subcellular location is the cell membrane. In terms of biological role, disease resistance (R) protein that specifically recognizes the avrPphB type III effector avirulence protein from Pseudomonas syringae. Also confers resistance against Hyaloperonospora parasitica (downy mildew). Resistance proteins guard the plant against pathogens that contain an appropriate avirulence protein via an indirect interaction with this avirulence protein. That triggers a defense system including the hypersensitive response, which restricts the pathogen growth. Requires PBS1 to trigger the defense reaction against avrPphB. In case of infection by Pseudomonas syringae, AvrPphB triggers RPS5-mediated defense mechanism via the cleavage of PBS1, suggesting that the cleavage of PBS1 could trigger an exchange of ADP for ATP, thereby activating RPS5. May function as a fine-tuned sensor of alterations in the structure of the effector target PBS1. The sequence is that of Disease resistance protein RPS5 (RPS5) from Arabidopsis thaliana (Mouse-ear cress).